Here is a 119-residue protein sequence, read N- to C-terminus: Large ribosomal subunit protein bL20 (119 aa).

It belongs to the bacterial ribosomal protein bL20 family.

In terms of biological role, binds directly to 23S ribosomal RNA and is necessary for the in vitro assembly process of the 50S ribosomal subunit. It is not involved in the protein synthesizing functions of that subunit. The polypeptide is Large ribosomal subunit protein bL20 (Cellvibrio japonicus (strain Ueda107) (Pseudomonas fluorescens subsp. cellulosa)).